A 712-amino-acid chain; its full sequence is Small ribosomal subunit protein uS3c (712 aa).

Positions 1 to 118 are S3-like 1st part; that stretch reads MGQKVHPLGF…IKVSKDLVTN (118 aa). The tract at residues 119–580 is intervening sequence (IVS); it reads LQKTRKYLFK…LQTAFLTQIE (462 aa). Residues 581-712 form an S3-like 2nd part region; it reads SQRKMYKANL…VWIFKGYSKI (132 aa).

The protein belongs to the universal ribosomal protein uS3 family. As to quaternary structure, part of the 30S ribosomal subunit.

The protein resides in the plastid. Its subcellular location is the chloroplast. This Chlamydomonas reinhardtii (Chlamydomonas smithii) protein is Small ribosomal subunit protein uS3c (rps3).